Consider the following 430-residue polypeptide: Histidine--tRNA ligase (430 aa).

The protein belongs to the class-II aminoacyl-tRNA synthetase family. Homodimer.

The protein resides in the cytoplasm. It carries out the reaction tRNA(His) + L-histidine + ATP = L-histidyl-tRNA(His) + AMP + diphosphate + H(+). The sequence is that of Histidine--tRNA ligase from Lactococcus lactis subsp. cremoris (strain SK11).